The following is a 319-amino-acid chain: Thioredoxin reductase (319 aa).

37–44 (ERGVPGGQ) is a binding site for FAD. C136 and C139 are oxidised to a cystine. 279–288 (DVRAKSLRQI) lines the FAD pocket.

It belongs to the class-II pyridine nucleotide-disulfide oxidoreductase family. Homodimer. FAD is required as a cofactor.

The protein localises to the cytoplasm. The catalysed reaction is [thioredoxin]-dithiol + NADP(+) = [thioredoxin]-disulfide + NADPH + H(+). The protein is Thioredoxin reductase (trxB) of Listeria monocytogenes serovar 1/2a (strain ATCC BAA-679 / EGD-e).